An 880-amino-acid chain; its full sequence is DNA mismatch repair protein MutS (880 aa).

624 to 631 (GPNMAGKS) serves as a coordination point for ATP.

It belongs to the DNA mismatch repair MutS family.

This protein is involved in the repair of mismatches in DNA. It is possible that it carries out the mismatch recognition step. This protein has a weak ATPase activity. This Alkaliphilus metalliredigens (strain QYMF) protein is DNA mismatch repair protein MutS.